A 312-amino-acid chain; its full sequence is Putative clathrin assembly protein At2g01920 (312 aa).

In terms of domain architecture, ENTH spans 21–152 (LITATDEKFT…ILYYNKNMIR (132 aa)).

It localises to the membrane. The protein resides in the clathrin-coated pit. The protein localises to the golgi apparatus. It is found in the cytoplasmic vesicle. Its subcellular location is the clathrin-coated vesicle. The polypeptide is Putative clathrin assembly protein At2g01920 (Arabidopsis thaliana (Mouse-ear cress)).